The primary structure comprises 295 residues: G1/S-specific cyclin-D1 (295 aa).

In terms of domain architecture, Cyclin N-terminal spans 28–152; sequence LRAMLKTEET…LLVNKLKWNL (125 aa). Lysine 269 is covalently cross-linked (Glycyl lysine isopeptide (Lys-Gly) (interchain with G-Cter in ubiquitin)). Positions 269–295 are disordered; sequence KATEEEGEVEEEAGLACTPTDVRDVDI. Threonine 286 carries the phosphothreonine modification.

It belongs to the cyclin family. Cyclin D subfamily. As to quaternary structure, interacts with either CDK4 or CDK6 protein kinase to form a serine/threonine kinase holoenzyme complex. The cyclin subunit imparts substrate specificity to the complex. Component of the ternary complex CCND1/CDK4/CDKN1B required for nuclear translocation and modulation of CDK4-mediated kinase activity. Interacts directly with CDKN1B. Can form similar complexes with either CDKN1A or CDKN2A. Interacts with UHRF2; the interaction ubiquitinates CCND1 and appears to occur independently of phosphorylation. Interacts with USP2. Interacts (via cyclin N-terminal domain) with INSM1 (via N-terminal region); the interaction competes with the binding of CCND1 to CDK4 during cell cycle progression and inhibits CDK4 activity. Interacts with CDK4; the interaction is prevented with the binding of CCND1 to INSM1 during cell cycle progression. Phosphorylation at Thr-286 by MAP kinases is required for ubiquitination and degradation by the DCX(AMBRA1) complex. It also plays an essential role for recognition by the FBXO31 component of SCF (SKP1-cullin-F-box) protein ligase complex following DNA damage. In terms of processing, ubiquitinated at Lys-269 by the DCX(AMBRA1) complex during the transition from G1 to S cell phase, leading to its degradation: ubiquitination is dependent on Thr-286 phosphorylation. The DCX(AMBRA1) complex represents the major regulator of CCND1 stability during the G1/S transition. Also ubiquitinated by the SCF(FBXO4) and Cul7-RING(FBXW8) ubiquitin-protein ligase complexes. Following DNA damage it is ubiquitinated by the SCF(FBXO31) protein ligase complex. SCF(FBXO31) ubiquitination is dependent on Thr-286 phosphorylation. Ubiquitinated also by UHRF2 apparently in a phosphorylation-independent manner. Ubiquitination leads to its degradation and G1 arrest. Deubiquitinated by USP2; leading to its stabilization.

Its subcellular location is the nucleus. It is found in the cytoplasm. The protein resides in the nucleus membrane. Regulatory component of the cyclin D1-CDK4 (DC) complex that phosphorylates and inhibits members of the retinoblastoma (RB) protein family including RB1 and regulates the cell-cycle during G(1)/S transition. Phosphorylation of RB1 allows dissociation of the transcription factor E2F from the RB/E2F complex and the subsequent transcription of E2F target genes which are responsible for the progression through the G(1) phase. Hypophosphorylates RB1 in early G(1) phase. Cyclin D-CDK4 complexes are major integrators of various mitogenenic and antimitogenic signals. Also a substrate for SMAD3, phosphorylating SMAD3 in a cell-cycle-dependent manner and repressing its transcriptional activity. Component of the ternary complex, cyclin D1/CDK4/CDKN1B, required for nuclear translocation and activity of the cyclin D-CDK4 complex. Exhibits transcriptional corepressor activity with INSM1 on the NEUROD1 and INS promoters in a cell cycle-independent manner. This is G1/S-specific cyclin-D1 (Ccnd1) from Rattus norvegicus (Rat).